A 67-amino-acid chain; its full sequence is Small ribosomal subunit protein eS27 (67 aa).

4 residues coordinate Zn(2+): Cys22, Cys25, Cys41, and Cys44. The C4-type zinc finger occupies 22 to 44; sequence CPDCGNEQVVFSHAAMVVRCLVC.

The protein belongs to the eukaryotic ribosomal protein eS27 family. In terms of assembly, part of the 30S ribosomal subunit. Zn(2+) is required as a cofactor.

The chain is Small ribosomal subunit protein eS27 from Pyrobaculum islandicum (strain DSM 4184 / JCM 9189 / GEO3).